Reading from the N-terminus, the 1976-residue chain is Protein TIC 214 (1976 aa).

A run of 6 helical transmembrane segments spans residues 11–31 (LLLL…YYGF), 64–84 (FIMG…HLAL), 87–107 (PHTL…FFWN), 126–146 (LSIQ…HFVL), 173–193 (FFGW…VLSW), and 221–241 (IFSI…PSPI). Acidic residues predominate over residues 619 to 635 (FEEEEEEEEEDDQEEST). Disordered regions lie at residues 619–642 (FEEE…GIRS) and 830–861 (SSYV…EDKR). Residues 836–861 (GAKEKEKIEEEHEEEKGEYKRKEDKR) are compositionally biased toward basic and acidic residues. The next 2 helical transmembrane spans lie at 1054–1074 (IIKI…FFVL) and 1202–1222 (IYMS…QFFL). A compositionally biased stretch (basic and acidic residues) spans 1633–1665 (QKERFHPKPKVESNQKGYLELENRNRDEKERQH). The disordered stretch occupies residues 1633 to 1669 (QKERFHPKPKVESNQKGYLELENRNRDEKERQHQGNL).

This sequence belongs to the TIC214 family. As to quaternary structure, part of the Tic complex.

It localises to the plastid. The protein localises to the chloroplast inner membrane. Functionally, involved in protein precursor import into chloroplasts. May be part of an intermediate translocation complex acting as a protein-conducting channel at the inner envelope. This Nymphaea alba (White water-lily) protein is Protein TIC 214.